We begin with the raw amino-acid sequence, 318 residues long: Potassium channel subfamily K member 15 (318 aa).

Over 1-8 the chain is Cytoplasmic; it reads MRKQSART. A helical transmembrane segment spans residues 9-29; the sequence is AALILCILSYLLVGAAVFDAL. An intramembrane region (pore-forming) is located at residues 80 to 101; sequence FAGSFYFAITVITTIGYGHAAP. Residues 108 to 128 form a helical membrane-spanning segment; that stretch reads VFCMFYALLGIPLTLVTFQSL. The Cytoplasmic segment spans residues 129-158; sequence GERLNALVRCLLLAAKRCLGLRRPHVSAEN. The chain crosses the membrane as a helical span at residues 159-179; the sequence is MVVAGLLLCAATLALGAAAFA. The pore-forming intramembrane region spans 189-209; that stretch reads AYYYCFITLTTIGFGDFVALQ. A helical transmembrane segment spans residues 223 to 243; the sequence is FSFLYILLGLTVIGAFLNLVV. The Cytoplasmic portion of the chain corresponds to 244–318; that stretch reads LRFLASAEAP…DRLRARRKSI (75 aa). The segment at 296-318 is disordered; it reads LSPEAVHDCHSSPDRLRARRKSI. The segment covering 300–311 has biased composition (basic and acidic residues); sequence AVHDCHSSPDRL.

This sequence belongs to the two pore domain potassium channel (TC 1.A.1.8) family. Heterodimer. Post-translationally, phosphorylated. In terms of tissue distribution, brain-specific. Highly expressed in auditory nuclei, in Purkinje cells and in olfactory bulb mitral cells.

The protein localises to the membrane. Functionally, probable potassium channel subunit. No channel activity observed in heterologous systems. May need to associate with another protein to form a functional channel. In Rattus norvegicus (Rat), this protein is Potassium channel subfamily K member 15 (Kcnk15).